We begin with the raw amino-acid sequence, 172 residues long: MANSQKVIDVSNAHYNLNLELGSVYAQYAHIADDQFSMPFLAKFINDLSNDKLGVHKDLISEYARKIEIPLHTKFSVDVSFKPTDPKELVKHILETEQKVRKHVANMAKVCLEEGDFETFSFVKWFVDDGIKDFDDVRTIHDFFENGNNNLQVEYAIRQIFKANEAWGRKII.

A Ferritin-like diiron domain is found at 1-148; that stretch reads MANSQKVIDV…TIHDFFENGN (148 aa).

This is an uncharacterized protein from Ureaplasma urealyticum (Ureaplasma urealyticum biotype 2).